The following is a 372-amino-acid chain: uncharacterized protein (372 aa).

The interval 49–72 (FSHKGGGKGGGSGAGSNDGGCSGE) is disordered. Positions 55-70 (GKGGGSGAGSNDGGCS) are enriched in gly residues.

This is an uncharacterized protein from Halorubrum lacusprofundi (strain ATCC 49239 / DSM 5036 / JCM 8891 / ACAM 34).